The following is a 311-amino-acid chain: Pyrimidine-specific ribonucleoside hydrolase RihA (311 aa).

The active site involves His240.

The protein belongs to the IUNH family. RihA subfamily.

Functionally, hydrolyzes cytidine or uridine to ribose and cytosine or uracil, respectively. In Salmonella typhimurium (strain LT2 / SGSC1412 / ATCC 700720), this protein is Pyrimidine-specific ribonucleoside hydrolase RihA.